We begin with the raw amino-acid sequence, 358 residues long: Photosystem II protein D1 (358 aa).

The next 3 helical transmembrane spans lie at 28 to 45 (YVGWFGVLMVPTLLAAAI), 117 to 132 (HFLIGICCWLGRQWEL), and 141 to 155 (WICVAYSAPLSAAFA). Residue histidine 117 participates in chlorophyll a binding. Tryptophan 125 provides a ligand contact to pheophytin a. Residues aspartate 169 and glutamate 188 each coordinate [CaMn4O5] cluster. The chain crosses the membrane as a helical span at residues 196-217 (FHMIGVAGMFGGSLFSAMHGSL). Residue histidine 197 coordinates chlorophyll a. Residues histidine 214 and 263-264 (SF) contribute to the a quinone site. Histidine 214 lines the Fe cation pocket. Residue histidine 271 coordinates Fe cation. Residues 273–287 (FLAAWPVICIWITSL) traverse the membrane as a helical segment. Residues histidine 331, glutamate 332, aspartate 341, and alanine 343 each coordinate [CaMn4O5] cluster. A propeptide spanning residues 344–358 (AAESTPVALIAPAIG) is cleaved from the precursor.

The protein belongs to the reaction center PufL/M/PsbA/D family. As to quaternary structure, PSII is composed of 1 copy each of membrane proteins PsbA, PsbB, PsbC, PsbD, PsbE, PsbF, PsbH, PsbI, PsbJ, PsbK, PsbL, PsbM, PsbT, PsbX, PsbY, Psb30/Ycf12, peripheral proteins PsbO, CyanoQ (PsbQ), PsbU, PsbV and a large number of cofactors. It forms dimeric complexes. The D1/D2 heterodimer binds P680, chlorophylls that are the primary electron donor of PSII, and subsequent electron acceptors. It shares a non-heme iron and each subunit binds pheophytin, quinone, additional chlorophylls, carotenoids and lipids. D1 provides most of the ligands for the Mn4-Ca-O5 cluster of the oxygen-evolving complex (OEC). There is also a Cl(-1) ion associated with D1 and D2, which is required for oxygen evolution. The PSII complex binds additional chlorophylls, carotenoids and specific lipids. is required as a cofactor. Post-translationally, tyr-160 forms a radical intermediate that is referred to as redox-active TyrZ, YZ or Y-Z. In terms of processing, C-terminally processed by CtpA; processing is essential to allow assembly of the oxygen-evolving complex and thus photosynthetic growth.

The protein resides in the cellular thylakoid membrane. The catalysed reaction is 2 a plastoquinone + 4 hnu + 2 H2O = 2 a plastoquinol + O2. Functionally, photosystem II (PSII) is a light-driven water:plastoquinone oxidoreductase that uses light energy to abstract electrons from H(2)O, generating O(2) and a proton gradient subsequently used for ATP formation. It consists of a core antenna complex that captures photons, and an electron transfer chain that converts photonic excitation into a charge separation. The D1/D2 (PsbA/PsbD) reaction center heterodimer binds P680, the primary electron donor of PSII as well as several subsequent electron acceptors. In Prochlorococcus marinus (strain MIT 9313), this protein is Photosystem II protein D1.